A 229-amino-acid polypeptide reads, in one-letter code: Platelet-activating factor acetylhydrolase IB subunit alpha2 (229 aa).

Position 2 is an N-acetylserine (Ser2). Position 2 is a phosphoserine (Ser2). Residue Ser48 is part of the active site. Ser64 is modified (phosphoserine). Catalysis depends on residues Asp193 and His196. A Phosphothreonine modification is found at Thr220.

The protein belongs to the 'GDSL' lipolytic enzyme family. Platelet-activating factor acetylhydrolase IB beta/gamma subunits subfamily. In terms of assembly, forms a catalytic dimer which is either homodimer (alpha2/alpha2 homodimer) or heterodimer with PAFAH1B3 (alpha2/alpha1 heterodimer). Component of the cytosolic (PAF-AH (I)) heterotetrameric enzyme, which is composed of PAFAH1B1 (beta), PAFAH1B2 (alpha2) and PAFAH1B3 (alpha1) subunits. The catalytic activity of the enzyme resides in the alpha1 (PAFAH1B3) and alpha2 (PAFAH1B2) subunits, whereas the beta subunit (PAFAH1B1) has regulatory activity. Trimer formation is not essential for the catalytic activity. Interacts (homodimer form) with PAFAH1B1 (homodimer form); PAFAH1B2 competes with NDEL1 for PAFAH1B1 binding. Interacts with VLDLR; this interaction may modulate the Reelin pathway.

The protein resides in the cytoplasm. It carries out the reaction a 1-O-alkyl-2-acetyl-sn-glycero-3-phosphocholine + H2O = a 1-O-alkyl-sn-glycero-3-phosphocholine + acetate + H(+). The catalysed reaction is 1-O-hexadecyl-2-acetyl-sn-glycero-3-phosphocholine + H2O = 1-O-hexadecyl-sn-glycero-3-phosphocholine + acetate + H(+). The enzyme catalyses 1-O-hexadecyl-2-acetyl-sn-glycero-3-phosphate + H2O = 1-O-hexadecyl-sn-glycero-3-phosphate + acetate + H(+). It catalyses the reaction 1-O-hexadecyl-2-acetyl-sn-glycero-3-phosphoethanolamine + H2O = 1-O-hexadecyl-sn-glycero-3-phosphoethanolamine + acetate + H(+). Beta subunit (PAFAH1B1) stimulates the acetylhydrolase activity of the alpha2/alpha2 catalytic homodimer. Alpha2 catalytic subunit of the cytosolic type I platelet-activating factor (PAF) acetylhydrolase (PAF-AH (I)) heterotetrameric enzyme that catalyzes the hydrolyze of the acetyl group at the sn-2 position of PAF and its analogs and modulates the action of PAF. The activity and substrate specificity of PAF-AH (I) are affected by its subunit composition. The alpha2/alpha2 homodimer (PAFAH1B2/PAFAH1B2 homodimer) hydrolyzes PAF and 1-O-alkyl-2-acetyl-sn-glycero-3-phosphorylethanolamine (AAGPE) more efficiently than 1-O-alkyl-2-acetyl-sn-glycero-3-phosphoric acid (AAGPA). In contrast, the alpha1/alpha2 heterodimer(PAFAH1B3/PAFAH1B3 heterodimer) hydrolyzes AAGPA more efficiently than PAF, but has little hydrolytic activity towards AAGPE. May play a role in male germ cell meiosis during the late pachytenestage and meiotic divisions as well as early spermiogenesis. The polypeptide is Platelet-activating factor acetylhydrolase IB subunit alpha2 (Pongo abelii (Sumatran orangutan)).